Consider the following 534-residue polypeptide: Neryl diphosphate diphosphatase, chloroplastic (534 aa).

Mg(2+) contacts are provided by D272, D276, D416, and E424. Positions 272 to 276 match the DDXXD motif motif; that stretch reads DDIFD.

The protein belongs to the terpene synthase family. Mg(2+) is required as a cofactor.

It is found in the plastid. It localises to the chloroplast. The enzyme catalyses neryl diphosphate + H2O = nerol + diphosphate. The protein operates within secondary metabolite biosynthesis; terpenoid biosynthesis. Monoterpene synthase that catalyzes the hydrolysis of neryl diphosphate (NPP) to form nerol and diphosphate. Is specific for NPP and has no hydrolase activity toward geranyl diphosphate (GPP) or farnesyl diphosphate (FPP). The monoterpene nerol may have an insect repellent effect for the plant leaves. This chain is Neryl diphosphate diphosphatase, chloroplastic, found in Glycine max (Soybean).